The primary structure comprises 199 residues: uncharacterized protein (199 aa).

A helical membrane pass occupies residues F7–I27.

The protein belongs to the band 7/mec-2 family.

Its subcellular location is the membrane. This is an uncharacterized protein from Methanocaldococcus jannaschii (strain ATCC 43067 / DSM 2661 / JAL-1 / JCM 10045 / NBRC 100440) (Methanococcus jannaschii).